The chain runs to 55 residues: Large ribosomal subunit protein bL33 (55 aa).

The protein belongs to the bacterial ribosomal protein bL33 family.

The chain is Large ribosomal subunit protein bL33 from Gluconacetobacter diazotrophicus (strain ATCC 49037 / DSM 5601 / CCUG 37298 / CIP 103539 / LMG 7603 / PAl5).